Reading from the N-terminus, the 106-residue chain is Large ribosomal subunit protein bL21 (106 aa).

This sequence belongs to the bacterial ribosomal protein bL21 family. In terms of assembly, part of the 50S ribosomal subunit. Contacts protein L20.

Functionally, this protein binds to 23S rRNA in the presence of protein L20. The protein is Large ribosomal subunit protein bL21 of Chlamydia caviae (strain ATCC VR-813 / DSM 19441 / 03DC25 / GPIC) (Chlamydophila caviae).